The primary structure comprises 815 residues: Ubiquitin carboxyl-terminal hydrolase 16 (815 aa).

The tract at residues 1–27 is disordered; sequence MGKKKVKDRSAGTDSSSETAGPSCTHI. Residues 12–22 show a composition bias toward polar residues; it reads GTDSSSETAGP. The UBP-type zinc-finger motif lies at 22–143; it reads PSCTHIRKGT…QLITNIRKQV (122 aa). Zn(2+) contacts are provided by Cys-24, His-26, Cys-48, Cys-51, Cys-76, Cys-79, Cys-84, His-91, His-95, His-104, Cys-117, and Cys-120. Residues 148–161 are compositionally biased toward basic and acidic residues; the sequence is DKRNASKKSWKEDI. The interval 148-200 is disordered; that stretch reads DKRNASKKSWKEDISVMNSAEQTQDEEKGKKGKQKSSSKQEDSPKSHQSAAAG. A USP domain is found at 208–814; it reads RGLSNLGNTC…QAYLLFYEKI (607 aa). Cys-217 serves as the catalytic Nucleophile. Basic residues-rich tracts occupy residues 411–420 and 449–468; these read NQKKAVQHRH and QQKK…RRQQ. The tract at residues 411–510 is disordered; it reads NQKKAVQHRH…GSADAQPADT (100 aa). A compositionally biased stretch (polar residues) spans 478–510; that stretch reads AITNQSSTDPADSSMQTQTVSVNGSADAQPADT. The Proton acceptor role is filled by His-752.

It belongs to the peptidase C19 family. USP16 subfamily. As to quaternary structure, homotetramer.

It localises to the nucleus. It carries out the reaction Thiol-dependent hydrolysis of ester, thioester, amide, peptide and isopeptide bonds formed by the C-terminal Gly of ubiquitin (a 76-residue protein attached to proteins as an intracellular targeting signal).. In terms of biological role, specifically deubiquitinates 'Lys-120' of histone H2A (H2AK119Ub), a specific tag for epigenetic transcriptional repression, thereby acting as a coactivator. Deubiquitination of histone H2A is a prerequisite for subsequent phosphorylation at 'Ser-11' of histone H3 (H3S10ph), and is required for chromosome segregation when cells enter into mitosis. Regulates Hox gene expression via histone H2A deubiquitination. Prefers nucleosomal substrates. Does not deubiquitinate histone H2B. The protein is Ubiquitin carboxyl-terminal hydrolase 16 (usp16) of Danio rerio (Zebrafish).